The chain runs to 295 residues: Ventral anterior homeobox 1a (295 aa).

The segment covering 20–33 (ISKPKDNKEIRETQ) has biased composition (basic and acidic residues). The interval 20 to 63 (ISKPKDNKEIRETQAKMPSTYLKEQPGTYPAPGSSELCAKNKSS) is disordered. The segment at residues 97-156 (PKRSRTSFTAEQLYRLEMEFQRCQYVVGRERTDLSRQLNLSETQVKVWFQNRRTKQKKDQ) is a DNA-binding region (homeobox). The disordered stretch occupies residues 203-226 (RAPNSSGPGTRSLATVTSTPPHQP). Residues 204-222 (APNSSGPGTRSLATVTSTP) show a composition bias toward polar residues.

It belongs to the EMX homeobox family.

It localises to the nucleus. Functionally, may play a role in the specification and maintenance of basal forebrain identity. The protein is Ventral anterior homeobox 1a (vax1-a) of Xenopus laevis (African clawed frog).